The sequence spans 276 residues: MAIKKFKPTSNGRRNMSVSDFAEITTDTPEKSLLSPIRKRGGRNNQGKLTVRHQGGGHKRQYRIIDFKRDKDGIPGRVATIEYDPNRSANIALVHYADGEKRYIIAPKGIKVGQEIESGENADIKLGNALPLGSIPVGTVIHNIELKPGRGGQIARSAGAEAQILGREEKYTLVRLSSGEVRLILTTCRATIGQVGNIEHELVRVGKAGRSRWKGIRPTVRGSVMNPNDHPHGGGEGRAPIGRKSPMSPWGKPTLGYKTRQRNKPSDKYIVRKRKK.

The tract at residues 219–276 is disordered; the sequence is TVRGSVMNPNDHPHGGGEGRAPIGRKSPMSPWGKPTLGYKTRQRNKPSDKYIVRKRKK.

It belongs to the universal ribosomal protein uL2 family. As to quaternary structure, part of the 50S ribosomal subunit. Forms a bridge to the 30S subunit in the 70S ribosome.

In terms of biological role, one of the primary rRNA binding proteins. Required for association of the 30S and 50S subunits to form the 70S ribosome, for tRNA binding and peptide bond formation. It has been suggested to have peptidyltransferase activity; this is somewhat controversial. Makes several contacts with the 16S rRNA in the 70S ribosome. This chain is Large ribosomal subunit protein uL2, found in Oceanobacillus iheyensis (strain DSM 14371 / CIP 107618 / JCM 11309 / KCTC 3954 / HTE831).